Consider the following 374-residue polypeptide: Palmitoyltransferase PFA5 (374 aa).

Residues 1–13 (MALSWNIRIRRRS) lie on the Cytoplasmic side of the membrane. Residues 14–34 (WFRFILPIIVLGLLCYGTWAY) traverse the membrane as a helical segment. The Lumenal portion of the chain corresponds to 35-55 (CHKLCYEQVDKRLRQKSVSVG). A helical membrane pass occupies residues 56–76 (LICAVCFLDVVVIFIWLQIVI). The Cytoplasmic segment spans residues 77–173 (LVGPGTQPHV…TVIGRDNYRL (97 aa)). One can recognise a DHHC domain in the interval 129–179 (IWCSECQSLKMERTHHSSELGHCIPRFDHYCMWIGTVIGRDNYRLFVQFAA). Residues 174–194 (FVQFAAYFSTLLLIMWVSICV) traverse the membrane as a helical segment. The Lumenal portion of the chain corresponds to 195–217 (YIRIITQHNHNYSPNLNANIIST). Residues 218-238 (LVFAILGWLLTASLLASSIFY) traverse the membrane as a helical segment. At 239–374 (MSQNKTSLEA…ASGDDSDPAY (136 aa)) the chain is on the cytoplasmic side.

It belongs to the DHHC palmitoyltransferase family. PFA5 subfamily. Post-translationally, autopalmitoylated.

It is found in the membrane. It carries out the reaction L-cysteinyl-[protein] + hexadecanoyl-CoA = S-hexadecanoyl-L-cysteinyl-[protein] + CoA. This chain is Palmitoyltransferase PFA5 (PFA5), found in Saccharomyces cerevisiae (strain ATCC 204508 / S288c) (Baker's yeast).